Consider the following 428-residue polypeptide: Anaerobic glycerol-3-phosphate dehydrogenase subunit B (428 aa).

This sequence belongs to the anaerobic G-3-P dehydrogenase subunit B family. Composed of a catalytic GlpA/B dimer and of membrane bound GlpC. FMN is required as a cofactor.

It carries out the reaction a quinone + sn-glycerol 3-phosphate = dihydroxyacetone phosphate + a quinol. The protein operates within polyol metabolism; glycerol degradation via glycerol kinase pathway; glycerone phosphate from sn-glycerol 3-phosphate (anaerobic route): step 1/1. Its function is as follows. Conversion of glycerol 3-phosphate to dihydroxyacetone. Uses fumarate or nitrate as electron acceptor. In Pasteurella multocida (strain Pm70), this protein is Anaerobic glycerol-3-phosphate dehydrogenase subunit B.